The primary structure comprises 362 residues: Phosphatidylserine decarboxylase proenzyme (362 aa).

A helical membrane pass occupies residues 26-44; sequence YLLTGVTILSFIFMFQYKY. Residues Asp-147, His-206, and Ser-316 each act as charge relay system; for autoendoproteolytic cleavage activity in the active site. Ser-316 (schiff-base intermediate with substrate; via pyruvic acid; for decarboxylase activity) is an active-site residue. Position 316 is a pyruvic acid (Ser); by autocatalysis (Ser-316).

It belongs to the phosphatidylserine decarboxylase family. PSD-B subfamily. Eukaryotic type I sub-subfamily. Heterodimer of a large membrane-associated beta subunit and a small pyruvoyl-containing alpha subunit. Pyruvate is required as a cofactor. Post-translationally, is synthesized initially as an inactive proenzyme. Formation of the active enzyme involves a self-maturation process in which the active site pyruvoyl group is generated from an internal serine residue via an autocatalytic post-translational modification. Two non-identical subunits are generated from the proenzyme in this reaction, and the pyruvate is formed at the N-terminus of the alpha chain, which is derived from the carboxyl end of the proenzyme. The autoendoproteolytic cleavage occurs by a canonical serine protease mechanism, in which the side chain hydroxyl group of the serine supplies its oxygen atom to form the C-terminus of the beta chain, while the remainder of the serine residue undergoes an oxidative deamination to produce ammonia and the pyruvoyl prosthetic group on the alpha chain. During this reaction, the Ser that is part of the protease active site of the proenzyme becomes the pyruvoyl prosthetic group, which constitutes an essential element of the active site of the mature decarboxylase.

The protein localises to the endoplasmic reticulum membrane. The catalysed reaction is a 1,2-diacyl-sn-glycero-3-phospho-L-serine + H(+) = a 1,2-diacyl-sn-glycero-3-phosphoethanolamine + CO2. It functions in the pathway phospholipid metabolism; phosphatidylethanolamine biosynthesis; phosphatidylethanolamine from CDP-diacylglycerol: step 2/2. Catalyzes the formation of phosphatidylethanolamine (PtdEtn) from phosphatidylserine (PtdSer). Plays a central role in phospholipid metabolism and in the interorganelle trafficking of phosphatidylserine. This is Phosphatidylserine decarboxylase proenzyme from Plasmodium falciparum.